The following is an 838-amino-acid chain: Urease (838 aa).

Positions 402 to 838 (GGFDTHIHFI…LPLTQDYFVY (437 aa)) constitute a Urease domain. Ni(2+) is bound by residues histidine 407, histidine 409, and lysine 490. Residue lysine 490 is modified to N6-carboxylysine. Residue histidine 492 participates in substrate binding. Ni(2+) is bound by residues histidine 519 and histidine 545. Histidine 593 (proton donor) is an active-site residue. Position 633 (aspartate 633) interacts with Ni(2+).

The protein in the C-terminal section; belongs to the metallo-dependent hydrolases superfamily. Urease alpha subunit family. Homohexamer. It depends on Ni cation as a cofactor. In terms of processing, carboxylation allows a single lysine to coordinate two nickel ions.

It carries out the reaction urea + 2 H2O + H(+) = hydrogencarbonate + 2 NH4(+). It participates in nitrogen metabolism; urea degradation; CO(2) and NH(3) from urea (urease route): step 1/1. This chain is Urease (ure1), found in Aspergillus fumigatus (strain ATCC MYA-4609 / CBS 101355 / FGSC A1100 / Af293) (Neosartorya fumigata).